The following is a 640-amino-acid chain: 1,4-alpha-glucan branching enzyme GlgB (640 aa).

Asp318 acts as the Nucleophile in catalysis. Glu371 (proton donor) is an active-site residue.

Belongs to the glycosyl hydrolase 13 family. GlgB subfamily. As to quaternary structure, monomer.

It catalyses the reaction Transfers a segment of a (1-&gt;4)-alpha-D-glucan chain to a primary hydroxy group in a similar glucan chain.. It participates in glycan biosynthesis; glycogen biosynthesis. Functionally, catalyzes the formation of the alpha-1,6-glucosidic linkages in glycogen by scission of a 1,4-alpha-linked oligosaccharide from growing alpha-1,4-glucan chains and the subsequent attachment of the oligosaccharide to the alpha-1,6 position. This is 1,4-alpha-glucan branching enzyme GlgB from Francisella philomiragia subsp. philomiragia (strain ATCC 25017 / CCUG 19701 / FSC 153 / O#319-036).